Reading from the N-terminus, the 468-residue chain is uncharacterized protein (468 aa).

The tract at residues 1–22 is disordered; it reads MVKRSSHRQVVLDEDDEENYNN. The segment at 85-123 adopts an RING-type zinc-finger fold; sequence CPICTEALQRPFTTHCGHTYCYECLLNWLKESKSCPTCR. A compositionally biased stretch (low complexity) spans 386–402; sequence DSLNSSSNNSPSHNNIH. The segment at 386–468 is disordered; the sequence is DSLNSSSNNS…TIQLDSDEES (83 aa). Residues 417–434 show a composition bias toward polar residues; it reads IVTNGTGLRSSQSSSQNR.

The protein localises to the nucleus. This is an uncharacterized protein from Schizosaccharomyces pombe (strain 972 / ATCC 24843) (Fission yeast).